The following is a 321-amino-acid chain: Endochitinase 33 (321 aa).

The N-terminal stretch at 1–19 is a signal peptide; it reads MPSLTALASLLALVPSALA. The GH18 domain maps to 27-321; it reads QNIAVYWGQN…FETQVVNALR (295 aa). The Proton donor role is filled by Glu167.

It belongs to the glycosyl hydrolase 18 family. Chitinase class III subfamily. Monomer.

Its subcellular location is the secreted. It catalyses the reaction Random endo-hydrolysis of N-acetyl-beta-D-glucosaminide (1-&gt;4)-beta-linkages in chitin and chitodextrins.. Its function is as follows. Secreted chitinase involved in the degradation of chitin, a component of the cell walls of fungi and exoskeletal elements of some animals (including worms and arthropods). Plays a morphogenetic role during apical growth, cell division and differentiation (cell wall morphogenesis). May be involved in the degradation and further assimilation of phytopathogenic fungi, namely mycoparasitism, the major mechanism accounting for the antagonistic activity against phytopathogenic fungi displayed by Trichoderma. This is Endochitinase 33 (chit33) from Trichoderma harzianum (Hypocrea lixii).